A 417-amino-acid chain; its full sequence is NADH-quinone oxidoreductase subunit D (417 aa).

The protein belongs to the complex I 49 kDa subunit family. NDH-1 is composed of 14 different subunits. Subunits NuoB, C, D, E, F, and G constitute the peripheral sector of the complex.

It localises to the cell inner membrane. It catalyses the reaction a quinone + NADH + 5 H(+)(in) = a quinol + NAD(+) + 4 H(+)(out). NDH-1 shuttles electrons from NADH, via FMN and iron-sulfur (Fe-S) centers, to quinones in the respiratory chain. The immediate electron acceptor for the enzyme in this species is believed to be ubiquinone. Couples the redox reaction to proton translocation (for every two electrons transferred, four hydrogen ions are translocated across the cytoplasmic membrane), and thus conserves the redox energy in a proton gradient. The sequence is that of NADH-quinone oxidoreductase subunit D from Hydrogenovibrio crunogenus (strain DSM 25203 / XCL-2) (Thiomicrospira crunogena).